The chain runs to 271 residues: MGNTTSERVSGERHGAKAARAEGGGHGPGKEHKIMVGSTDDPSVFSLPDSKLPGDKEFVPWQQDLDDSVKPAQQARPTVIRWSEGGKEVFISGSFNNWSTKIPLIKSHNDFVAILDLPEGEHQYKFFVDGQWVHDPSEPVVTSQLGTINNLIHVKKSDFEVFDALKLDSMESSETSCRDLSSSPPGPYGQEMYVFRSEERFKSPPILPPHLLQVILNKDTNISCDPALLPEPNHVMLNHLYALSIKDSVMVLSATHRYKKKYVTTLLYKPI.

The segment at 1–46 (MGNTTSERVSGERHGAKAARAEGGGHGPGKEHKIMVGSTDDPSVFS) is disordered. The residue at position 38 (Ser-38) is a Phosphoserine; by ULK1. Thr-39 bears the Phosphothreonine; by ULK1 mark. At Ser-68 the chain carries Phosphoserine; by ULK1. Ser-94 and Ser-107 each carry phosphoserine. A Phosphothreonine modification is found at Thr-147. 4 positions are modified to phosphoserine: Ser-157, Ser-169, Ser-173, and Ser-183.

The protein belongs to the 5'-AMP-activated protein kinase beta subunit family. As to quaternary structure, AMPK is a heterotrimer of an alpha catalytic subunit (PRKAA1 or PRKAA2), a beta (PRKAB1 or PRKAB2) and a gamma non-catalytic subunits (PRKAG1, PRKAG2 or PRKAG3). In terms of processing, phosphorylated when associated with the catalytic subunit (PRKAA1 or PRKAA2). Phosphorylated by ULK1 and ULK2; leading to negatively regulate AMPK activity and suggesting the existence of a regulatory feedback loop between ULK1, ULK2 and AMPK.

In terms of biological role, non-catalytic subunit of AMP-activated protein kinase (AMPK), an energy sensor protein kinase that plays a key role in regulating cellular energy metabolism. In response to reduction of intracellular ATP levels, AMPK activates energy-producing pathways and inhibits energy-consuming processes: inhibits protein, carbohydrate and lipid biosynthesis, as well as cell growth and proliferation. AMPK acts via direct phosphorylation of metabolic enzymes, and by longer-term effects via phosphorylation of transcription regulators. Also acts as a regulator of cellular polarity by remodeling the actin cytoskeleton; probably by indirectly activating myosin. Beta non-catalytic subunit acts as a scaffold on which the AMPK complex assembles, via its C-terminus that bridges alpha (PRKAA1 or PRKAA2) and gamma subunits (PRKAG1, PRKAG2 or PRKAG3). This Mus musculus (Mouse) protein is 5'-AMP-activated protein kinase subunit beta-2 (Prkab2).